Consider the following 1368-residue polypeptide: DNA-directed RNA polymerase subunit beta (1368 aa).

The protein belongs to the RNA polymerase beta chain family. In terms of assembly, the RNAP catalytic core consists of 2 alpha, 1 beta, 1 beta' and 1 omega subunit. When a sigma factor is associated with the core the holoenzyme is formed, which can initiate transcription.

It catalyses the reaction RNA(n) + a ribonucleoside 5'-triphosphate = RNA(n+1) + diphosphate. Functionally, DNA-dependent RNA polymerase catalyzes the transcription of DNA into RNA using the four ribonucleoside triphosphates as substrates. This Legionella pneumophila subsp. pneumophila (strain Philadelphia 1 / ATCC 33152 / DSM 7513) protein is DNA-directed RNA polymerase subunit beta.